Consider the following 610-residue polypeptide: UvrABC system protein C (610 aa).

The GIY-YIG domain occupies 16–94; it reads SQPGVYRMYD…IKLYQPRYNV (79 aa). The UVR domain maps to 204–239; the sequence is DQVLTQLIARMEKASQDLAFEEAARIRDQIQAVRRV.

The protein belongs to the UvrC family. As to quaternary structure, interacts with UvrB in an incision complex.

It is found in the cytoplasm. Functionally, the UvrABC repair system catalyzes the recognition and processing of DNA lesions. UvrC both incises the 5' and 3' sides of the lesion. The N-terminal half is responsible for the 3' incision and the C-terminal half is responsible for the 5' incision. This chain is UvrABC system protein C, found in Salmonella paratyphi C (strain RKS4594).